Here is a 463-residue protein sequence, read N- to C-terminus: Immune-associated nucleotide-binding protein 10 (463 aa).

Residues 3–211 (EPIKNIVLVG…YTYQLHRKIK (209 aa)) form the AIG1-type G domain. A G1 region spans residues 12-19 (GRTGNGKS). GTP contacts are provided by residues 12-20 (GRTGNGKSS) and Ser33. The tract at residues 39–43 (GVTMI) is G2. Positions 61–64 (DTPG) are G3. Residues 131–134 (TGGD) are G4. The tract at residues 170–172 (DNK) is G5. Asn171 is a GTP binding site. Positions 173–308 (SKDEKKKVEQ…KQLIAQANRM (136 aa)) form a coiled coil.

It belongs to the TRAFAC class TrmE-Era-EngA-EngB-Septin-like GTPase superfamily. AIG1/Toc34/Toc159-like paraseptin GTPase family. IAN subfamily. In terms of tissue distribution, expressed in radicles of the germinating seeds.

This Arabidopsis thaliana (Mouse-ear cress) protein is Immune-associated nucleotide-binding protein 10.